The sequence spans 197 residues: Phospholipid hydroperoxide glutathione peroxidase (197 aa).

A Phosphoserine modification is found at Ser-40. Residue Sec-73 is part of the active site. Position 73 (Sec-73) is a non-standard amino acid, selenocysteine. Val-78 is subject to Phosphoserine.

Belongs to the glutathione peroxidase family. As to quaternary structure, monomer. Has a tendency to form higher mass oligomers. Interacts with FUNDC1; this interaction promotes GPX4 recruitment into mitochondria through TOM/TIM complex where it is degraded by mitophagy. In terms of tissue distribution, present primarily in testis. Expressed in flagella of epididymal sperm. Isoform Cytoplasmic: Highly expressed in testis. Present in spermatogonia, spermatocyte and spermatid (at protein level).

The protein resides in the nucleus. It localises to the nucleolus. The protein localises to the mitochondrion. Its subcellular location is the cytoplasm. It carries out the reaction a hydroperoxy polyunsaturated fatty acid + 2 glutathione = a hydroxy polyunsaturated fatty acid + glutathione disulfide + H2O. The enzyme catalyses 2 glutathione + H2O2 = glutathione disulfide + 2 H2O. The catalysed reaction is tert-butyl hydroperoxide + 2 glutathione = tert-butanol + glutathione disulfide + H2O. It catalyses the reaction cumene hydroperoxide + 2 glutathione = 2-phenylpropan-2-ol + glutathione disulfide + H2O. It carries out the reaction (9S)-hydroperoxy-(10E,12Z)-octadecadienoate + 2 glutathione = (9S)-hydroxy-(10E,12Z)-octadecadienoate + glutathione disulfide + H2O. The enzyme catalyses (13S)-hydroperoxy-(9Z,11E)-octadecadienoate + 2 glutathione = (13S)-hydroxy-(9Z,11E)-octadecadienoate + glutathione disulfide + H2O. The catalysed reaction is (5S)-hydroperoxy-(6E,8Z,11Z,14Z)-eicosatetraenoate + 2 glutathione = (5S)-hydroxy-(6E,8Z,11Z,14Z)-eicosatetraenoate + glutathione disulfide + H2O. It catalyses the reaction (12R)-hydroperoxy-(5Z,8Z,10E,14Z)-eicosatetraenoate + 2 glutathione = (12R)-hydroxy-(5Z,8Z,10E,14Z)-eicosatetraenoate + glutathione disulfide + H2O. It carries out the reaction (12S)-hydroperoxy-(5Z,8Z,10E,14Z)-eicosatetraenoate + 2 glutathione = (12S)-hydroxy-(5Z,8Z,10E,14Z)-eicosatetraenoate + glutathione disulfide + H2O. The enzyme catalyses (15S)-hydroperoxy-(5Z,8Z,11Z,13E)-eicosatetraenoate + 2 glutathione = (15S)-hydroxy-(5Z,8Z,11Z,13E)-eicosatetraenoate + glutathione disulfide + H2O. The catalysed reaction is (5S)-hydroperoxy-(6E,8Z,11Z,14Z,17Z)-eicosapentaenoate + 2 glutathione = (5S)-hydroxy-(6E,8Z,11Z,14Z,17Z)-eicosapentaenoate + glutathione disulfide + H2O. It catalyses the reaction (12S)-hydroperoxy-(5Z,8Z,10E,14Z,17Z)-eicosapentaenoate + 2 glutathione = (12S)-hydroxy-(5Z,8Z,10E,14Z,17Z)-eicosapentaenoate + glutathione disulfide + H2O. It carries out the reaction (15S)-hydroperoxy-(5Z,8Z,11Z,13E,17Z)-eicosapentaenoate + 2 glutathione = (15S)-hydroxy-(5Z,8Z,11Z,13E,17Z)-eicosapentaenoate + glutathione disulfide + H2O. The enzyme catalyses (15S)-hydroperoxy-(11Z,13E)-eicosadienoate + 2 glutathione = (15S)-hydroxy-(11Z,13E)-eicosadienoate + glutathione disulfide + H2O. The catalysed reaction is (17S)-hydroperoxy-(4Z,7Z,10Z,13Z,15E,19Z)-docosahexaenoate + 2 glutathione = (17S)-hydroxy-(4Z,7Z,10Z,13Z,15E,19Z)-docosahexaenoate + glutathione disulfide + H2O. It catalyses the reaction a hydroperoxy-1,2-diacyl-glycero-3-phosphocholine + 2 glutathione = a hydroxy-1,2-diacyl-glycero-3-phosphocholine + glutathione disulfide + H2O. Its function is as follows. Essential antioxidant peroxidase that directly reduces phospholipid hydroperoxide even if they are incorporated in membranes and lipoproteins. Can also reduce fatty acid hydroperoxide, cholesterol hydroperoxide and thymine hydroperoxide. Plays a key role in protecting cells from oxidative damage by preventing membrane lipid peroxidation. Required to prevent cells from ferroptosis, a non-apoptotic cell death resulting from an iron-dependent accumulation of lipid reactive oxygen species. The presence of selenocysteine (Sec) versus Cys at the active site is essential for life: it provides resistance to overoxidation and prevents cells against ferroptosis. The presence of Sec at the active site is also essential for the survival of a specific type of parvalbumin-positive interneurons, thereby preventing against fatal epileptic seizures. May be required to protect cells from the toxicity of ingested lipid hydroperoxides. Required for normal sperm development and male fertility. Essential for maturation and survival of photoreceptor cells. Plays a role in a primary T-cell response to viral and parasitic infection by protecting T-cells from ferroptosis and by supporting T-cell expansion. Plays a role of glutathione peroxidase in platelets in the arachidonic acid metabolism. Reduces hydroperoxy ester lipids formed by a 15-lipoxygenase that may play a role as down-regulator of the cellular 15-lipoxygenase pathway. Can also reduce small soluble hydroperoxides such as H2O2, cumene hydroperoxide and tert-butyl hydroperoxide. Functionally, specifically able to suppress the production of leukotriene and prostaglandin in response to several stimuli by reducing fatty acid hydroperoxide. Specifically required to prevent mitochondrial cell death by mediating reduction of cardiolipin hydroperoxide. Also required for normal sperm development and male fertility. In terms of biological role, required for male fertility by stabilizing the condensed chromatin in sperm nuclei. The polypeptide is Phospholipid hydroperoxide glutathione peroxidase (Rattus norvegicus (Rat)).